Consider the following 180-residue polypeptide: Large ribosomal subunit protein uL5 (180 aa).

The protein belongs to the universal ribosomal protein uL5 family. As to quaternary structure, part of the 50S ribosomal subunit; part of the 5S rRNA/L5/L18/L25 subcomplex. Contacts the 5S rRNA and the P site tRNA. Forms a bridge to the 30S subunit in the 70S ribosome.

This is one of the proteins that bind and probably mediate the attachment of the 5S RNA into the large ribosomal subunit, where it forms part of the central protuberance. In the 70S ribosome it contacts protein S13 of the 30S subunit (bridge B1b), connecting the 2 subunits; this bridge is implicated in subunit movement. Contacts the P site tRNA; the 5S rRNA and some of its associated proteins might help stabilize positioning of ribosome-bound tRNAs. The sequence is that of Large ribosomal subunit protein uL5 from Chlamydia felis (strain Fe/C-56) (Chlamydophila felis).